The following is a 360-amino-acid chain: SVP1-like protein 2 (360 aa).

WD repeat units lie at residues 12-50 (AHEPAVLNAAFNQDQTCFAVCHESGFQVYNTDPMELRMK), 191-231 (AHKS…LRFE), and 236-275 (LDRATVTSIKFSPDDSKLAVLSDKNTLHVYNLTAADPQPE).

This sequence belongs to the WD repeat PROPPIN family.

It is found in the vacuole membrane. The protein localises to the cytoplasmic vesicle membrane. In terms of biological role, involved in mitochondrial or peroxisomal functions and amino acid signaling pathways. The chain is SVP1-like protein 2 (HSV2) from Pichia angusta (Yeast).